The chain runs to 775 residues: Subtilisin-like protease SBT4.1 (775 aa).

The first 23 residues, 1–23, serve as a signal peptide directing secretion; sequence MAIAFHTFLLQLLLFFFASFAEA. The N-linked (GlcNAc...) asparagine glycan is linked to asparagine 24. Positions 24 to 106 are cleaved as a propeptide — activation peptide; sequence NDSRKTYLVQ…VSRSRNLKLQ (83 aa). An Inhibitor I9 domain is found at 29 to 105; sequence TYLVQMKVGG…EVSRSRNLKL (77 aa). The region spanning 110–606 is the Peptidase S8 domain; sequence SWDFMNLTLK…SGHLNATKVR (497 aa). Asparagine 115 and asparagine 126 each carry an N-linked (GlcNAc...) asparagine glycan. Aspartate 136 acts as the Charge relay system in catalysis. N-linked (GlcNAc...) asparagine glycosylation is present at asparagine 162. Histidine 196 (charge relay system) is an active-site residue. Residues 365–459 enclose the PA domain; that stretch reads FYPLLNEKAP…FLDEQKKGKL (95 aa). Residue asparagine 437 is glycosylated (N-linked (GlcNAc...) asparagine). The active-site Charge relay system is serine 551. Asparagine 601 is a glycosylation site (N-linked (GlcNAc...) asparagine).

The protein belongs to the peptidase S8 family. Post-translationally, the C-terminal propeptide is autocleaved.

It localises to the secreted. The sequence is that of Subtilisin-like protease SBT4.1 from Arabidopsis thaliana (Mouse-ear cress).